Consider the following 467-residue polypeptide: Probable circularly permuted 1,3-beta-glucanase TOS1 (467 aa).

The first 21 residues, 1–21 (MKFSSTTLLAGLSSLTATVSA), serve as a signal peptide directing secretion. The span at 158–172 (PAVSSAAADDNANSG) shows a compositional bias: low complexity. Disordered regions lie at residues 158–187 (PAVS…GYGS) and 200–223 (SDIS…TASV). The segment covering 173-185 (SGSGSSAGSGSGY) has biased composition (gly residues). Over residues 203-222 (STKSAPTSTSAQPSSSETAS) the composition is skewed to low complexity. The ExDxxE motif signature appears at 374 to 379 (ELDLFE). The disordered stretch occupies residues 391–413 (HLHDGQGSSQNSNNGGGGSQDYF).

Belongs to the PGA52 family. Cleaved by KEX2 in vitro.

It is found in the secreted. It carries out the reaction Hydrolysis of (1-&gt;3)-beta-D-glucosidic linkages in (1-&gt;3)-beta-D-glucans.. Probable circularly permuted 1,3-beta-glucanase involved in cell wall modification through beta-1,3-glucan network alterations such as increased branching or remodeling. Plays a role in engulfment by host macrophages. This is Probable circularly permuted 1,3-beta-glucanase TOS1 from Candida albicans (strain SC5314 / ATCC MYA-2876) (Yeast).